The following is a 615-amino-acid chain: Elongation factor 4 (615 aa).

The region spanning 14–200 (SKIRNFCIIA…KVAELIPAPT (187 aa)) is the tr-type G domain. GTP-binding positions include 26-31 (DHGKST) and 147-150 (NKID).

Belongs to the TRAFAC class translation factor GTPase superfamily. Classic translation factor GTPase family. LepA subfamily.

The protein localises to the cell membrane. The enzyme catalyses GTP + H2O = GDP + phosphate + H(+). Functionally, required for accurate and efficient protein synthesis under certain stress conditions. May act as a fidelity factor of the translation reaction, by catalyzing a one-codon backward translocation of tRNAs on improperly translocated ribosomes. Back-translocation proceeds from a post-translocation (POST) complex to a pre-translocation (PRE) complex, thus giving elongation factor G a second chance to translocate the tRNAs correctly. Binds to ribosomes in a GTP-dependent manner. The chain is Elongation factor 4 from Corynebacterium aurimucosum (strain ATCC 700975 / DSM 44827 / CIP 107346 / CN-1) (Corynebacterium nigricans).